A 59-amino-acid polypeptide reads, in one-letter code: Large ribosomal subunit protein bL33 (59 aa).

This sequence belongs to the bacterial ribosomal protein bL33 family.

The protein is Large ribosomal subunit protein bL33 of Borrelia recurrentis (strain A1).